The sequence spans 420 residues: COP9 signalosome complex subunit 5 (420 aa).

The region spanning 73 to 208 (AALSALACMK…IGAFRTMPET (136 aa)) is the MPN domain. 3 residues coordinate Zn(2+): His-154, His-156, and Asp-167. The JAMM motif motif lies at 154-167 (HSHPGYGCWLSGID).

The protein belongs to the peptidase M67A family. CSN5 subfamily. As to quaternary structure, component of the COP9 signalosome (CSN) complex.

It localises to the cytoplasm. The protein resides in the nucleus. In terms of biological role, catalytic component of the COP9 signalosome (CSN) complex that acts as an regulator of the ubiquitin (Ubl) conjugation pathway by mediating the deneddylation of the cullin subunit of SCF-type E3 ubiquitin-protein ligase complexes. The CSN complex is involved in the regulation of the mating pheromone response. This chain is COP9 signalosome complex subunit 5 (RRI1), found in Eremothecium gossypii (strain ATCC 10895 / CBS 109.51 / FGSC 9923 / NRRL Y-1056) (Yeast).